The following is a 705-amino-acid chain: Effector protein hopD1 (705 aa).

Polar residues-rich tracts occupy residues 1–11 (MNPLRSIQHNI) and 28–41 (QAQQ…SPSQ). 2 disordered regions span residues 1–41 (MNPL…SPSQ) and 173–207 (SSSL…DSGS). Residues 173–184 (SSSLETPLLSSP) show a composition bias toward low complexity.

It localises to the secreted. Effector protein involved in non-host recognition. This is Effector protein hopD1 (hopD1) from Pseudomonas syringae pv. tomato (strain ATCC BAA-871 / DC3000).